A 252-amino-acid chain; its full sequence is Triosephosphate isomerase (252 aa).

10–12 (NWK) serves as a coordination point for substrate. Catalysis depends on His96, which acts as the Electrophile. Catalysis depends on Glu168, which acts as the Proton acceptor. Substrate contacts are provided by residues Gly174, Ser214, and 235-236 (GG).

The protein belongs to the triosephosphate isomerase family. As to quaternary structure, homodimer.

The protein localises to the cytoplasm. The enzyme catalyses D-glyceraldehyde 3-phosphate = dihydroxyacetone phosphate. It functions in the pathway carbohydrate biosynthesis; gluconeogenesis. The protein operates within carbohydrate degradation; glycolysis; D-glyceraldehyde 3-phosphate from glycerone phosphate: step 1/1. Involved in the gluconeogenesis. Catalyzes stereospecifically the conversion of dihydroxyacetone phosphate (DHAP) to D-glyceraldehyde-3-phosphate (G3P). This Streptococcus pyogenes serotype M1 protein is Triosephosphate isomerase.